Here is a 138-residue protein sequence, read N- to C-terminus: Phosphoribosyl-AMP cyclohydrolase (138 aa).

Residue Asp84 coordinates Mg(2+). Cys85 contributes to the Zn(2+) binding site. Mg(2+) is bound by residues Asp86 and Asp88. Zn(2+)-binding residues include Cys102 and Cys109.

It belongs to the PRA-CH family. As to quaternary structure, homodimer. Mg(2+) serves as cofactor. Zn(2+) is required as a cofactor.

It is found in the cytoplasm. The enzyme catalyses 1-(5-phospho-beta-D-ribosyl)-5'-AMP + H2O = 1-(5-phospho-beta-D-ribosyl)-5-[(5-phospho-beta-D-ribosylamino)methylideneamino]imidazole-4-carboxamide. The protein operates within amino-acid biosynthesis; L-histidine biosynthesis; L-histidine from 5-phospho-alpha-D-ribose 1-diphosphate: step 3/9. Functionally, catalyzes the hydrolysis of the adenine ring of phosphoribosyl-AMP. The protein is Phosphoribosyl-AMP cyclohydrolase of Burkholderia orbicola (strain MC0-3).